The following is a 320-amino-acid chain: Aspartate carbamoyltransferase catalytic subunit (320 aa).

Residues arginine 57 and threonine 58 each contribute to the carbamoyl phosphate site. Lysine 85 lines the L-aspartate pocket. The carbamoyl phosphate site is built by arginine 107, histidine 141, and glutamine 144. Positions 174 and 228 each coordinate L-aspartate. Carbamoyl phosphate contacts are provided by glycine 269 and proline 270.

It belongs to the aspartate/ornithine carbamoyltransferase superfamily. ATCase family. As to quaternary structure, heterododecamer (2C3:3R2) of six catalytic PyrB chains organized as two trimers (C3), and six regulatory PyrI chains organized as three dimers (R2).

It carries out the reaction carbamoyl phosphate + L-aspartate = N-carbamoyl-L-aspartate + phosphate + H(+). It functions in the pathway pyrimidine metabolism; UMP biosynthesis via de novo pathway; (S)-dihydroorotate from bicarbonate: step 2/3. Functionally, catalyzes the condensation of carbamoyl phosphate and aspartate to form carbamoyl aspartate and inorganic phosphate, the committed step in the de novo pyrimidine nucleotide biosynthesis pathway. This chain is Aspartate carbamoyltransferase catalytic subunit, found in Mycobacterium marinum (strain ATCC BAA-535 / M).